The chain runs to 763 residues: Dual specificity tyrosine-phosphorylation-regulated kinase 1A (763 aa).

S14 is modified (phosphoserine). The disordered stretch occupies residues 32–57 (GQMPHSHQYSDRRQPNISDQQVSALS). The span at 46-57 (PNISDQQVSALS) shows a compositional bias: polar residues. Phosphotyrosine; by autocatalysis is present on Y111. The segment at 115-136 (KKRRHQQGQGDDSSHKKERKVY) is disordered. The short motif at 117–134 (RRHQQGQGDDSSHKKERK) is the Bipartite nuclear localization signal element. Y140 is subject to Phosphotyrosine; by autocatalysis. Position 145 is a phosphotyrosine (Y145). Y159 bears the Phosphotyrosine; by autocatalysis mark. In terms of domain architecture, Protein kinase spans 159–479 (YEIDSLIGKG…PYYALQHSFF (321 aa)). ATP is bound at residue 165-173 (IGKGSFGQV). Y177 is subject to Phosphotyrosine; by autocatalysis. K188 is a binding site for ATP. Y219 is subject to Phosphotyrosine; by autocatalysis. 238–241 (FEML) provides a ligand contact to ATP. The active-site Proton acceptor is D287. Phosphoserine; by autocatalysis is present on S310. Phosphotyrosine; by autocatalysis occurs at positions 319 and 321. The residue at position 402 (T402) is a Phosphothreonine; by autocatalysis. The segment at 408–442 (TKDGKREYKPPGTRKLHNILGVETGGPGGRRAGES) is disordered. Residue Y449 is modified to Phosphotyrosine; by autocatalysis. The segment covering 485 to 501 (EGTNTSNSVSTSPAMEQ) has biased composition (polar residues). 3 disordered regions span residues 485 to 540 (EGTN…HSGG), 596 to 679 (NALH…GNQA), and 744 to 763 (DREE…VASS). Positions 502 to 525 (SQSSGTTSSTSSSSGGSSGTSNSG) are enriched in low complexity. 2 positions are modified to phosphoserine: S529 and S538. The tract at residues 595–625 (QNALHHHHGNSSHHHHHHHHHHHHHGQQALG) is histidine-rich domain (HRD). Over residues 598–620 (LHHHHGNSSHHHHHHHHHHHHHG) the composition is skewed to basic residues. Positions 634 to 645 (NSPTNSSSTQDS) are enriched in polar residues. Residues 654–672 (SMTSLSSSTTSSSTSSSST) show a composition bias toward low complexity. Residues S748 and S758 each carry the phosphoserine modification. Residues 754 to 763 (CVQQSPVASS) are compositionally biased toward polar residues.

This sequence belongs to the protein kinase superfamily. CMGC Ser/Thr protein kinase family. MNB/DYRK subfamily. As to quaternary structure, interacts with RAD54L2/ARIP4. Interacts with CRY2. Interacts with RANBP9. Interacts with WDR68. Interacts with SIRT1. (Microbial infection) Interacts with human adenovirus 5 E1A protein. In terms of processing, autophosphorylated on numerous tyrosine residues. Can also autophosphorylate on serine and threonine residues (in vitro). In terms of tissue distribution, ubiquitous. Highest levels in skeletal muscle, testis, fetal lung and fetal kidney.

It is found in the nucleus. The protein localises to the nucleus speckle. The catalysed reaction is L-seryl-[protein] + ATP = O-phospho-L-seryl-[protein] + ADP + H(+). It carries out the reaction L-threonyl-[protein] + ATP = O-phospho-L-threonyl-[protein] + ADP + H(+). It catalyses the reaction L-tyrosyl-[protein] + ATP = O-phospho-L-tyrosyl-[protein] + ADP + H(+). The enzyme catalyses [DNA-directed RNA polymerase] + ATP = phospho-[DNA-directed RNA polymerase] + ADP + H(+). Its activity is regulated as follows. Inhibited by RANBP9. Inhibited by harmine, leucettamine B and leucettine L41. Its function is as follows. Dual-specificity kinase which possesses both serine/threonine and tyrosine kinase activities. Exhibits a substrate preference for proline at position P+1 and arginine at position P-3. Plays an important role in double-strand breaks (DSBs) repair following DNA damage. Mechanistically, phosphorylates RNF169 and increases its ability to block accumulation of TP53BP1 at the DSB sites thereby promoting homologous recombination repair (HRR). Also acts as a positive regulator of transcription by acting as a CTD kinase that mediates phosphorylation of the CTD (C-terminal domain) of the large subunit of RNA polymerase II (RNAP II) POLR2A. May play a role in a signaling pathway regulating nuclear functions of cell proliferation. Modulates alternative splicing by phosphorylating the splice factor SRSF6. Has pro-survival function and negatively regulates the apoptotic process. Promotes cell survival upon genotoxic stress through phosphorylation of SIRT1. This in turn inhibits p53/TP53 activity and apoptosis. Phosphorylates SEPTIN4, SEPTIN5 and SF3B1 at 'Thr-434'. The polypeptide is Dual specificity tyrosine-phosphorylation-regulated kinase 1A (Homo sapiens (Human)).